The primary structure comprises 360 residues: UPF0324 membrane protein DVU_0123 (360 aa).

10 helical membrane-spanning segments follow: residues 20 to 42 (VTESLPGLLLVCAVALVASFVAP), 57 to 79 (KDFILAIIFGIIIRNTVGVPAVF), 100 to 122 (SYSLAGLVSVGAQALVFIAVFLF), 142 to 164 (AACLAAGMSVCGVSATIAIAPAV), 171 to 193 (MAYSIAVVLMFGLLALIAFPLIG), 203 to 225 (FGAFAGVGIVNSAQVLAAGFGFS), 232 to 254 (AGIYNIGRVVFLPFVVLMLAIMA), 278 to 297 (FPLFVLGFLAIVCLNTAGVL), 310 to 327 (EWAFLLGFASIGLTTRLS), and 337 to 359 (FLFGFGVAGLKAALALAAVLLFM).

The protein belongs to the UPF0324 family.

It is found in the cell membrane. The chain is UPF0324 membrane protein DVU_0123 from Nitratidesulfovibrio vulgaris (strain ATCC 29579 / DSM 644 / CCUG 34227 / NCIMB 8303 / VKM B-1760 / Hildenborough) (Desulfovibrio vulgaris).